The sequence spans 72 residues: uncharacterized protein (72 aa).

Residues 15-62 are disordered; sequence NNNYNNNNNNNNNNNNNNNNNNNNNNNNNNININNNNNNNNNNNNNNN.

This is an uncharacterized protein from Dictyostelium discoideum (Social amoeba).